Consider the following 312-residue polypeptide: G-protein coupled receptor BILF1 (312 aa).

At Met1–Thr40 the chain is on the extracellular side. Cystine bridges form between Cys28-Cys258 and Cys97-Cys174. The chain crosses the membrane as a helical span at residues Ser41–Val61. At Arg62 to Arg67 the chain is on the cytoplasmic side. Residues Met68–Ile88 traverse the membrane as a helical segment. Residues Gln89–Gly95 lie on the Extracellular side of the membrane. Residues Leu96–Leu116 traverse the membrane as a helical segment. Over Gly117 to Asn138 the chain is Cytoplasmic. A helical membrane pass occupies residues Val139–Ile159. The Extracellular portion of the chain corresponds to Thr160–Gly192. A helical transmembrane segment spans residues Cys193 to Leu213. Topologically, residues Arg214–Thr228 are cytoplasmic. A helical transmembrane segment spans residues Phe229–Gly249. Residues Glu250–Gly269 lie on the Extracellular side of the membrane. A helical membrane pass occupies residues Pro270–Met290. The Cytoplasmic portion of the chain corresponds to Asp291 to Thr312.

The protein belongs to the Epstein-Barr virus BILF1 protein family. As to quaternary structure, interacts with host CXCR4 to form higher-order heterooligomers. Interacts with host Gi heterotrimer.

Its subcellular location is the host cell membrane. The protein localises to the host mitochondrion outer membrane. Functionally, constitutively active, ligand-independent G protein-coupled receptor that has immunoevasive and oncogenic activities. Couples with the host inhibitory G protein (Gi) in order to disrupt the host chemokine signaling. As a consequence of its constitutive activity, mediates host CXCR4 inhibition. Enhances degradation of host major histocompatibility complex class I antigens via lysosomes, thereby modulating the antigen presentation to cytotoxic T cells. Targets selectively HLA-A, HLA-Band HLA-E molecules. Targets also newly synthesized MHC-I/peptide complexes en route to the host cell surface. Inhibits the host EIF2AK2/PKR phosphorylation. Displays tranforming activity. Utilizes its C-terminal tail to trigger host MAVS UFMylation via PARK2, resulting in selective MAVS removal from mitochondrial membranes and routing to lysosomes to prevent viral activation of the NLRP3 inflammasome. The sequence is that of G-protein coupled receptor BILF1 from Homo sapiens (Human).